We begin with the raw amino-acid sequence, 551 residues long: Adenine deaminase (551 aa).

Belongs to the metallo-dependent hydrolases superfamily. Adenine deaminase family. Mn(2+) serves as cofactor.

The enzyme catalyses adenine + H2O + H(+) = hypoxanthine + NH4(+). This is Adenine deaminase from Leuconostoc mesenteroides subsp. mesenteroides (strain ATCC 8293 / DSM 20343 / BCRC 11652 / CCM 1803 / JCM 6124 / NCDO 523 / NBRC 100496 / NCIMB 8023 / NCTC 12954 / NRRL B-1118 / 37Y).